The chain runs to 577 residues: Arginine--tRNA ligase (577 aa).

Positions 122 to 132 (PNVAKEMHVGH) match the 'HIGH' region motif.

It belongs to the class-I aminoacyl-tRNA synthetase family. In terms of assembly, monomer.

Its subcellular location is the cytoplasm. It catalyses the reaction tRNA(Arg) + L-arginine + ATP = L-arginyl-tRNA(Arg) + AMP + diphosphate. The sequence is that of Arginine--tRNA ligase from Salmonella paratyphi B (strain ATCC BAA-1250 / SPB7).